The chain runs to 175 residues: Ribulose bisphosphate carboxylase small subunit, chloroplastic 2 (175 aa).

A chloroplast-targeting transit peptide spans 1–46 (MAPTVMASSATSVAPFQGLKSTAGLPVSRRSTNSGFGNVSNGGRIK).

Belongs to the RuBisCO small chain family. In terms of assembly, heterohexadecamer of 8 large and 8 small subunits.

Its subcellular location is the plastid. It localises to the chloroplast. RuBisCO catalyzes two reactions: the carboxylation of D-ribulose 1,5-bisphosphate, the primary event in carbon dioxide fixation, as well as the oxidative fragmentation of the pentose substrate. Both reactions occur simultaneously and in competition at the same active site. Although the small subunit is not catalytic it is essential for maximal activity. The protein is Ribulose bisphosphate carboxylase small subunit, chloroplastic 2 of Oryza sativa subsp. japonica (Rice).